The following is a 577-amino-acid chain: 5'-nucleotidase (577 aa).

An N-terminal signal peptide occupies residues 1–30 (MPRVPSASATGSSALLSLLCAFSLGRAAPF). Zn(2+)-binding residues include Asp39, His41, Asp86, and Asn118. N-linked (GlcNAc...) asparagine glycosylation is present at Asn135. Residues His221 and His244 each coordinate Zn(2+). Asn246 is a binding site for substrate. Residues Asn311 and Asn347 are each glycosylated (N-linked (GlcNAc...) asparagine). Cystine bridges form between Cys353–Cys358 and Cys365–Cys387. Residue Arg354 coordinates substrate. 2 residues coordinate substrate: Gln390 and Arg395. A glycan (N-linked (GlcNAc...) asparagine) is linked at Asn403. Phe417 contacts substrate. A disulfide bridge links Cys476 with Cys479. 500-506 (YIAEGGD) is a binding site for substrate. Ser552 carries GPI-anchor amidated serine lipidation. A propeptide spans 553 to 577 (ATLPIINLKIGLSLFAFLTWFLHCS) (removed in mature form).

This sequence belongs to the 5'-nucleotidase family. Homodimer. It depends on Zn(2+) as a cofactor.

It localises to the cell membrane. It carries out the reaction a ribonucleoside 5'-phosphate + H2O = a ribonucleoside + phosphate. Functionally, hydrolyzes extracellular nucleotides into membrane permeable nucleosides. The chain is 5'-nucleotidase from Diplobatis ommata (Ocellated electric ray).